The sequence spans 67 residues: Conotoxin Cl6.6a (67 aa).

The signal sequence occupies residues 1 to 24 (MKLTCVLIAAVLLLAVCQLDSADA). The propeptide occupies 25–37 (TGYMRKNPSLRSP). 3 cysteine pairs are disulfide-bonded: Cys43-Cys57, Cys50-Cys61, and Cys56-Cys65.

Belongs to the conotoxin O1 superfamily. In terms of tissue distribution, expressed by the venom duct.

Its subcellular location is the secreted. The sequence is that of Conotoxin Cl6.6a from Californiconus californicus (California cone).